A 616-amino-acid polypeptide reads, in one-letter code: Dihydroxy-acid dehydratase (616 aa).

Aspartate 81 provides a ligand contact to Mg(2+). Cysteine 122 provides a ligand contact to [2Fe-2S] cluster. Aspartate 123 and lysine 124 together coordinate Mg(2+). At lysine 124 the chain carries N6-carboxylysine. [2Fe-2S] cluster is bound at residue cysteine 195. Residue glutamate 491 coordinates Mg(2+). Serine 517 functions as the Proton acceptor in the catalytic mechanism.

Belongs to the IlvD/Edd family. Homodimer. [2Fe-2S] cluster is required as a cofactor. The cofactor is Mg(2+).

The enzyme catalyses (2R)-2,3-dihydroxy-3-methylbutanoate = 3-methyl-2-oxobutanoate + H2O. The catalysed reaction is (2R,3R)-2,3-dihydroxy-3-methylpentanoate = (S)-3-methyl-2-oxopentanoate + H2O. It participates in amino-acid biosynthesis; L-isoleucine biosynthesis; L-isoleucine from 2-oxobutanoate: step 3/4. The protein operates within amino-acid biosynthesis; L-valine biosynthesis; L-valine from pyruvate: step 3/4. Its function is as follows. Functions in the biosynthesis of branched-chain amino acids. Catalyzes the dehydration of (2R,3R)-2,3-dihydroxy-3-methylpentanoate (2,3-dihydroxy-3-methylvalerate) into 2-oxo-3-methylpentanoate (2-oxo-3-methylvalerate) and of (2R)-2,3-dihydroxy-3-methylbutanoate (2,3-dihydroxyisovalerate) into 2-oxo-3-methylbutanoate (2-oxoisovalerate), the penultimate precursor to L-isoleucine and L-valine, respectively. This chain is Dihydroxy-acid dehydratase, found in Yersinia pseudotuberculosis serotype O:3 (strain YPIII).